We begin with the raw amino-acid sequence, 1053 residues long: 3-hydroxy-3-methylglutaryl-coenzyme A reductase (1053 aa).

Residues methionine 1–arginine 8 are Cytoplasmic-facing. A helical transmembrane segment spans residues tyrosine 9 to leucine 29. Topologically, residues glutamate 30–threonine 203 are lumenal. Residue asparagine 137 is glycosylated (N-linked (GlcNAc...) asparagine). A helical membrane pass occupies residues glutamate 204–leucine 224. An SSD domain is found at glutamate 204–leucine 365. At lysine 225 to lysine 232 the chain is on the cytoplasmic side. Residues phenylalanine 233–leucine 253 traverse the membrane as a helical segment. Topologically, residues valine 254–glycine 258 are lumenal. Residues valine 259–leucine 279 traverse the membrane as a helical segment. Over aspartate 280–histidine 320 the chain is Cytoplasmic. The next 2 membrane-spanning stretches (helical) occupy residues phenylalanine 321–phenylalanine 341 and phenylalanine 342–isoleucine 362. Residues leucine 363 to glycine 417 are Cytoplasmic-facing. A helical membrane pass occupies residues threonine 418–phenylalanine 438. Residues lysine 439 to serine 526 lie on the Lumenal side of the membrane. The N-linked (GlcNAc...) asparagine glycan is linked to asparagine 518. The chain crosses the membrane as a helical span at residues phenylalanine 527–leucine 547. At asparagine 548–arginine 1053 the chain is on the cytoplasmic side. Glutamate 712 serves as the catalytic Charge relay system. Serine 718 to lysine 724 lines the CoA pocket. Residues serine 779–phenylalanine 781 and aspartate 806–serine 814 each bind NADP(+). Lysine 846 serves as the catalytic Charge relay system. Valine 875–lysine 877 contributes to the CoA binding site. Residue aspartate 922 is the Charge relay system of the active site. Serine 1017–histidine 1018 serves as a coordination point for CoA. Residue histidine 1018 is the Proton donor of the active site. Asparagine 1022 to arginine 1023 contacts NADP(+). Serine 1024 is subject to Phosphoserine. Residue threonine 1028 is modified to Phosphothreonine. The tract at residues threonine 1028–arginine 1053 is disordered.

The protein belongs to the HMG-CoA reductase family.

It localises to the endoplasmic reticulum membrane. The protein localises to the nucleus envelope. The catalysed reaction is (R)-mevalonate + 2 NADP(+) + CoA = (3S)-3-hydroxy-3-methylglutaryl-CoA + 2 NADPH + 2 H(+). The protein operates within metabolic intermediate biosynthesis; (R)-mevalonate biosynthesis; (R)-mevalonate from acetyl-CoA: step 3/3. Part of the first module of ergosterol biosynthesis pathway that includes the early steps of the pathway, conserved across all eukaryotes, and which results in the formation of mevalonate from acetyl-coenzyme A (acetyl-CoA). Hmg1 catalyzes the reduction of hydroxymethylglutaryl-CoA (HMG-CoA) to mevalonate. The first module starts with the action of the cytosolic acetyl-CoA acetyltransferase eg10 that catalyzes the formation of acetoacetyl-CoA. The hydroxymethylglutaryl-CoA synthases erg13 then condenses acetyl-CoA with acetoacetyl-CoA to form HMG-CoA. The rate-limiting step of the early module is the reduction to mevalonate by the 3-hydroxy-3-methylglutaryl-coenzyme A (HMG-CoA) reductases hcs1. This is 3-hydroxy-3-methylglutaryl-coenzyme A reductase from Schizosaccharomyces pombe (strain 972 / ATCC 24843) (Fission yeast).